We begin with the raw amino-acid sequence, 66 residues long: Toxin Boma6b (66 aa).

The LCN-type CS-alpha/beta domain maps to 2 to 64 (RDAYIAQNYN…VPIKVEGKCH (63 aa)). Intrachain disulfides connect C12/C63, C16/C36, C22/C46, and C26/C48.

The protein belongs to the long (4 C-C) scorpion toxin superfamily. Sodium channel inhibitor family. Alpha subfamily. Expressed by the venom gland.

It localises to the secreted. Functionally, alpha toxins bind voltage-independently at site-3 of sodium channels (Nav) and inhibit the inactivation of the activated channels, thereby blocking neuronal transmission. The protein is Toxin Boma6b of Buthus occitanus mardochei (Moroccan scorpion).